A 240-amino-acid chain; its full sequence is Ribonuclease PH (240 aa).

Phosphate is bound by residues R87 and 125–127 (GTR).

This sequence belongs to the RNase PH family. In terms of assembly, homohexameric ring arranged as a trimer of dimers.

The enzyme catalyses tRNA(n+1) + phosphate = tRNA(n) + a ribonucleoside 5'-diphosphate. Phosphorolytic 3'-5' exoribonuclease that plays an important role in tRNA 3'-end maturation. Removes nucleotide residues following the 3'-CCA terminus of tRNAs; can also add nucleotides to the ends of RNA molecules by using nucleoside diphosphates as substrates, but this may not be physiologically important. Probably plays a role in initiation of 16S rRNA degradation (leading to ribosome degradation) during starvation. This is Ribonuclease PH from Pseudomonas fluorescens (strain SBW25).